Here is a 507-residue protein sequence, read N- to C-terminus: MLNADLKQQLKQLLELMEGNVEFVASLGSDEKSKELKELLTEISDMSPRLSLSEKSLKRTPSFSVNRPGEETGVTFAGIPLGHEFNSLVLAILQVSGRAPKEKQSIIDQIKNLEGSFHFETFISLTCQKCPDVVQALNLMSVINPNITHSMIDGAVFREESENIMAVPAVFLNGEEFGNGRMTIQDILSKLGSTADASEFENKEPYDVLIVGGGPASGSAAIYTARKGLRTGIVADRIGGQVNDTAGIENFITVKETTGSEFSSNLAAHIDQYDIDAMTGIRATDIEKTDEAIKVTLENGAVLESKTVIIATGAGWRKLNIPGEEQLINKGVAFCPHCDGPLFENKDVAVIGGGNSGVEAAIDLAGIVNHVTLFEFASELKADNVLQDRLRSLSNVDIKTNAKTTEVVGEDHVTGIRYEDMSTGEEHLLNLDGIFVQIGLLPNTSWLKDAVELNERGEIVIDCNNNTNVPGIFAAGDVTDQKNKQIIISMGAGANAALNAFDYIIRN.

207–222 provides a ligand contact to FAD; the sequence is DVLIVGGGPASGSAAI. C335 and C338 are oxidised to a cystine. Residue 347-361 coordinates NAD(+); sequence DVAVIGGGNSGVEAA. Residue 467-477 coordinates FAD; sequence TNVPGIFAAGD.

This sequence belongs to the class-II pyridine nucleotide-disulfide oxidoreductase family. As to quaternary structure, homodimer. It depends on FAD as a cofactor.

In terms of biological role, serves to protect the cell against DNA damage by alkyl hydroperoxides. It can use either NADH or NADPH as electron donor for direct reduction of redox dyes or of alkyl hydroperoxides when combined with the AhpC protein. The sequence is that of Alkyl hydroperoxide reductase subunit F (ahpF) from Staphylococcus aureus (strain MSSA476).